Consider the following 336-residue polypeptide: Protein SGT1 homolog (336 aa).

Residue Ala2 is modified to N-acetylalanine. TPR repeat units lie at residues 11–44 (SQRLFQSFSDALIDGDPQAALEELTKALEQNPDD), 45–78 (AQYYCQRAYCHILLGKYRDGIADVKKSLELNPNN), and 79–112 (CTALLRKGICEYHEKDYASALETFAEGQKLDSTD). The CS domain maps to 140-229 (QSKIKYDWYQ…PEAVRWEKLE (90 aa)). Thr236 carries the post-translational modification Phosphothreonine. Residues 247–336 (MYPSSSHYTR…PPDDMEWKQY (90 aa)) form the SGS domain. The residue at position 252 (Ser252) is a Phosphoserine. Phosphothreonine is present on Thr255. Residue Lys266 forms a Glycyl lysine isopeptide (Lys-Gly) (interchain with G-Cter in SUMO1); alternate linkage. Lys266 is covalently cross-linked (Glycyl lysine isopeptide (Lys-Gly) (interchain with G-Cter in SUMO2); alternate). Position 302 is a phosphoserine (Ser302).

It belongs to the SGT1 family. As to quaternary structure, probably associates with SCF (SKP1-CUL1-F-box protein) complex through interaction with SKP1. Interacts with S100A6. Interacts with HSP90. In terms of processing, phosphorylated at Ser-252 and Ser-302, dephosphorylation promotes nuclear translocation, most likely due to disruption of the SUGT1-HSP90 complex.

The protein resides in the cytoplasm. It is found in the nucleus. May play a role in ubiquitination and subsequent proteasomal degradation of target proteins. This is Protein SGT1 homolog from Mus musculus (Mouse).